Consider the following 403-residue polypeptide: Riboflavin biosynthesis protein RibBA (403 aa).

The tract at residues 1–204 is DHBP synthase; sequence MKNKVFASIG…IGELVNYRRR (204 aa). Residues 30-31, D35, 143-147, and E167 each bind D-ribulose 5-phosphate; these read RE and RTGHT. Mg(2+) is bound at residue E31. H146 is a binding site for Mg(2+). The GTP cyclohydrolase II stretch occupies residues 205–403; that stretch reads TEKFISEIVN…EKMGHMLKKV (199 aa). 255 to 259 provides a ligand contact to GTP; it reads RVHSS. Residues C260, C271, and C273 each coordinate Zn(2+). Residues Q276, 298–300, and T320 contribute to the GTP site; that span reads EGR. The Proton acceptor; for GTP cyclohydrolase activity role is filled by D332. The active-site Nucleophile; for GTP cyclohydrolase activity is R334. Residues T355 and K360 each coordinate GTP.

This sequence in the N-terminal section; belongs to the DHBP synthase family. It in the C-terminal section; belongs to the GTP cyclohydrolase II family. It depends on Mg(2+) as a cofactor. The cofactor is Mn(2+). Requires Zn(2+) as cofactor.

It carries out the reaction D-ribulose 5-phosphate = (2S)-2-hydroxy-3-oxobutyl phosphate + formate + H(+). It catalyses the reaction GTP + 4 H2O = 2,5-diamino-6-hydroxy-4-(5-phosphoribosylamino)-pyrimidine + formate + 2 phosphate + 3 H(+). The protein operates within cofactor biosynthesis; riboflavin biosynthesis; 2-hydroxy-3-oxobutyl phosphate from D-ribulose 5-phosphate: step 1/1. Its pathway is cofactor biosynthesis; riboflavin biosynthesis; 5-amino-6-(D-ribitylamino)uracil from GTP: step 1/4. Its function is as follows. Catalyzes the conversion of D-ribulose 5-phosphate to formate and 3,4-dihydroxy-2-butanone 4-phosphate. Functionally, catalyzes the conversion of GTP to 2,5-diamino-6-ribosylamino-4(3H)-pyrimidinone 5'-phosphate (DARP), formate and pyrophosphate. In Endomicrobium trichonymphae, this protein is Riboflavin biosynthesis protein RibBA.